Consider the following 329-residue polypeptide: Telomeric repeat-binding factor 2-interacting protein 1 (329 aa).

The BRCT domain maps to 63–86; that stretch reads AVSTDYVVACVESQRRLPLDLYRH. The 60-residue stretch at 94–153 folds into the Myb-like domain; the sequence is ASPRGRLPFTEAEDAALLRAVRERSGAPRVSGTALWKELECTGLTRHSWQAMRDRYLRHL. The interval 179–206 is disordered; that stretch reads EFESSESGSDTSDTPDELPLQNGEGTFP. A Nuclear localization signal motif is present at residues 313–329; that stretch reads AKFGAENVARRVAFRKS.

It belongs to the RAP1 family. As to quaternary structure, homodimer. Component of the shelterin complex (telosome). Interacts with terf2; the interaction is direct.

Its subcellular location is the nucleus. The protein resides in the chromosome. It localises to the telomere. Its function is as follows. Acts both as a regulator of telomere function and as a transcription regulator. Involved in the regulation of telomere length and protection as a component of the shelterin complex (telosome). Does not bind DNA directly: recruited to telomeric double-stranded 5'-TTAGGG-3' repeats via its interaction with terf2. Independently of its function in telomeres, also acts as a transcription regulator: recruited to extratelomeric 5'-TTAGGG-3' sites via its association with terf2 or other factors, and regulates gene expression. The polypeptide is Telomeric repeat-binding factor 2-interacting protein 1 (TERF2IP) (Gallus gallus (Chicken)).